A 349-amino-acid polypeptide reads, in one-letter code: Sterol-4-alpha-carboxylate 3-dehydrogenase ERG26, decarboxylating (349 aa).

NADP(+)-binding positions include 11–17 (GGSGFLG), 62–63 (DL), and 84–86 (CAS). Residues Ser-124 and Tyr-151 each coordinate substrate. NADP(+) is bound by residues Tyr-151, Lys-155, and 179–182 (PAGI). Lys-155 functions as the Proton donor in the catalytic mechanism.

It belongs to the 3-beta-HSD family. In terms of assembly, heterotetramer of ERG25, ERG26, ERG27 and ERG28. ERG28 acts as a scaffold to tether ERG27 and other 4,4-demethylation-related enzymes, forming a demethylation enzyme complex, in the endoplasmic reticulum.

It localises to the endoplasmic reticulum membrane. It catalyses the reaction 4beta-methylzymosterol-4alpha-carboxylate + NADP(+) = 3-dehydro-4-methylzymosterol + CO2 + NADPH. It functions in the pathway steroid biosynthesis; zymosterol biosynthesis; zymosterol from lanosterol: step 4/6. With respect to regulation, inhibited by FR171456, a natural product with broad antifungal activity. In terms of biological role, sterol-4-alpha-carboxylate 3-dehydrogenase; part of the third module of ergosterol biosynthesis pathway that includes the late steps of the pathway. ERG26 is a catalytic component of the C-4 demethylation complex that catalyzes the oxidative decarboxylation that results in a reduction of the 3-beta-hydroxy group at the C-3 carbon to an oxo group. The third module or late pathway involves the ergosterol synthesis itself through consecutive reactions that mainly occur in the endoplasmic reticulum (ER) membrane. Firstly, the squalene synthase ERG9 catalyzes the condensation of 2 farnesyl pyrophosphate moieties to form squalene, which is the precursor of all steroids. Squalene synthase is crucial for balancing the incorporation of farnesyl diphosphate (FPP) into sterol and nonsterol isoprene synthesis. Secondly, the squalene epoxidase ERG1 catalyzes the stereospecific oxidation of squalene to (S)-2,3-epoxysqualene, which is considered to be a rate-limiting enzyme in steroid biosynthesis. Then, the lanosterol synthase ERG7 catalyzes the cyclization of (S)-2,3 oxidosqualene to lanosterol, a reaction that forms the sterol core. In the next steps, lanosterol is transformed to zymosterol through a complex process involving various demethylation, reduction and desaturation reactions. The lanosterol 14-alpha-demethylase ERG11 (also known as CYP51) catalyzes C14-demethylation of lanosterol to produce 4,4'-dimethyl cholesta-8,14,24-triene-3-beta-ol, which is critical for ergosterol biosynthesis. The C-14 reductase ERG24 reduces the C14=C15 double bond of 4,4-dimethyl-cholesta-8,14,24-trienol to produce 4,4-dimethyl-cholesta-8,24-dienol. 4,4-dimethyl-cholesta-8,24-dienol is substrate of the C-4 demethylation complex ERG25-ERG26-ERG27 in which ERG25 catalyzes the three-step monooxygenation required for the demethylation of 4,4-dimethyl and 4alpha-methylsterols, ERG26 catalyzes the oxidative decarboxylation that results in a reduction of the 3-beta-hydroxy group at the C-3 carbon to an oxo group, and ERG27 is responsible for the reduction of the keto group on the C-3. ERG28 has a role as a scaffold to help anchor ERG25, ERG26 and ERG27 to the endoplasmic reticulum and ERG29 regulates the activity of the iron-containing C4-methylsterol oxidase ERG25. Then, the sterol 24-C-methyltransferase ERG6 catalyzes the methyl transfer from S-adenosyl-methionine to the C-24 of zymosterol to form fecosterol. The C-8 sterol isomerase ERG2 catalyzes the reaction which results in unsaturation at C-7 in the B ring of sterols and thus converts fecosterol to episterol. The sterol-C5-desaturase ERG3 then catalyzes the introduction of a C-5 double bond in the B ring to produce 5-dehydroepisterol. The C-22 sterol desaturase ERG5 further converts 5-dehydroepisterol into ergosta-5,7,22,24(28)-tetraen-3beta-ol by forming the C-22(23) double bond in the sterol side chain. Finally, ergosta-5,7,22,24(28)-tetraen-3beta-ol is substrate of the C-24(28) sterol reductase ERG4 to produce ergosterol. The chain is Sterol-4-alpha-carboxylate 3-dehydrogenase ERG26, decarboxylating from Saccharomyces cerevisiae (strain ATCC 204508 / S288c) (Baker's yeast).